A 189-amino-acid polypeptide reads, in one-letter code: UPF0340 protein EF_1967 (189 aa).

This sequence belongs to the UPF0340 family.

This is UPF0340 protein EF_1967 from Enterococcus faecalis (strain ATCC 700802 / V583).